Here is a 271-residue protein sequence, read N- to C-terminus: Neurexophilin-1 (271 aa).

Residues 1–21 (MQAACWYVLLLLQPTVYLVTC) form the signal peptide. Positions 22–97 (ANLTNGGKSE…WDWLRNSTDL (76 aa)) are II. Residues Asn-23, Asn-68, Asn-93, Asn-146, Asn-156, and Asn-162 are each glycosylated (N-linked (GlcNAc...) asparagine). Positions 98 to 176 (QEPRPRAKRR…LVPPTKIVEF (79 aa)) are III. The IV (linker domain) stretch occupies residues 177–185 (DLAQQTVID). Residues 186–271 (AKDSKSFNCR…HSDTPYFPSG (86 aa)) are v (Cys-rich).

The protein belongs to the neurexophilin family. Post-translationally, may be proteolytically processed at the boundary between the N-terminal non-conserved and the central conserved domain in neuron-like cells. Brain, only in a scattered subpopulation of neurons that probably represent inhibitory interneurons.

The protein localises to the secreted. Its function is as follows. May be signaling molecules that resemble neuropeptides. Ligand for alpha-neurexins. This Mus musculus (Mouse) protein is Neurexophilin-1 (Nxph1).